A 444-amino-acid polypeptide reads, in one-letter code: Tubulin beta chain (444 aa).

The MREI motif signature appears at 1–4 (MREI). Residue Gln11 coordinates GTP. Ser40 carries the phosphoserine modification. Thr55 bears the Phosphothreonine mark. Lys58 is subject to N6-acetyllysine; alternate. Lys58 is subject to N6-succinyllysine; alternate. Residue Lys58 forms a Glycyl lysine isopeptide (Lys-Gly) (interchain with G-Cter in ubiquitin); alternate linkage. GTP is bound by residues Glu69, Ser138, Gly142, Thr143, and Gly144. A Mg(2+)-binding site is contributed by Glu69. Residue Ser172 is modified to Phosphoserine; by CDK1. GTP-binding residues include Asn204 and Asn226. Residues Thr285 and Thr290 each carry the phosphothreonine modification. Arg318 carries the post-translational modification Omega-N-methylarginine. Residue Lys324 forms a Glycyl lysine isopeptide (Lys-Gly) (interchain with G-Cter in ubiquitin) linkage. The disordered stretch occupies residues 423–444 (QQYQDATAEEEEDFGEEAEEEA). A compositionally biased stretch (acidic residues) spans 429 to 444 (TAEEEEDFGEEAEEEA). 4 positions are modified to 5-glutamyl polyglutamate: Glu434, Glu438, Glu439, and Glu441. A 5-glutamyl glycine mark is found at Glu438, Glu439, Glu441, Glu442, and Glu443.

The protein belongs to the tubulin family. In terms of assembly, heterodimer of alpha and beta chains. A typical microtubule is a hollow water-filled tube with an outer diameter of 25 nm and an inner diameter of 15 nM. Alpha-beta heterodimers associate head-to-tail to form protofilaments running lengthwise along the microtubule wall with the beta-tubulin subunit facing the microtubule plus end conferring a structural polarity. Microtubules usually have 13 protofilaments but different protofilament numbers can be found in some organisms and specialized cells. Interacts with CIMAP3. Interacts with DIAPH1. Interacts with MX1. May interact with RNABP10. Interacts with CFAP157. Nascent tubulin polypeptide interacts (via beta-tubulin MREI motif) with TTC5/STRAP; this interaction results in tubulin mRNA-targeted degradation. The cofactor is Mg(2+). In terms of processing, some glutamate residues at the C-terminus are polyglycylated, resulting in polyglycine chains on the gamma-carboxyl group. Glycylation is mainly limited to tubulin incorporated into axonemes (cilia and flagella) whereas glutamylation is prevalent in neuronal cells, centrioles, axonemes, and the mitotic spindle. Both modifications can coexist on the same protein on adjacent residues, and lowering polyglycylation levels increases polyglutamylation, and reciprocally. Cilia and flagella glycylation is required for their stability and maintenance. Flagella glycylation controls sperm motility. Post-translationally, some glutamate residues at the C-terminus are polyglutamylated, resulting in polyglutamate chains on the gamma-carboxyl group. Polyglutamylation plays a key role in microtubule severing by spastin (SPAST). SPAST preferentially recognizes and acts on microtubules decorated with short polyglutamate tails: severing activity by SPAST increases as the number of glutamates per tubulin rises from one to eight, but decreases beyond this glutamylation threshold. Glutamylation is also involved in cilia motility. Phosphorylated on Ser-172 by CDK1 during the cell cycle, from metaphase to telophase, but not in interphase. This phosphorylation inhibits tubulin incorporation into microtubules.

The protein localises to the cytoplasm. The protein resides in the cytoskeleton. Functionally, tubulin is the major constituent of microtubules, a cylinder consisting of laterally associated linear protofilaments composed of alpha- and beta-tubulin heterodimers. Microtubules grow by the addition of GTP-tubulin dimers to the microtubule end, where a stabilizing cap forms. Below the cap, tubulin dimers are in GDP-bound state, owing to GTPase activity of alpha-tubulin. This Sus scrofa (Pig) protein is Tubulin beta chain (TUBB).